The chain runs to 386 residues: Homeobox protein Hox-A13 (386 aa).

The homeobox DNA-binding region spans 320–379; that stretch reads GRKKRVPYTKVQLKELEREYATNKFITKDKRRRISATTNLSERQVTIWFQNRRVKEKKVI.

This sequence belongs to the Abd-B homeobox family. In terms of assembly, binds DNA as a homodimer. Interacts with MEIS1, MEIS2 and MEIS3.

It is found in the nucleus. In terms of biological role, sequence-specific, AT-rich binding transcription factor which is part of a developmental regulatory system that provides cells with specific positional identities on the anterior-posterior axis. This is Homeobox protein Hox-A13 (Hoxa13) from Mus musculus (Mouse).